A 676-amino-acid chain; its full sequence is Lutropin-choriogonadotropic hormone receptor (676 aa).

A signal peptide spans 1–29 (MKQPLLALQLLKLLLLLLLPLPPLPRALR). The Extracellular segment spans residues 30–340 (EARCCPEPCN…EDIMGYDFLR (311 aa)). N-linked (GlcNAc...) asparagine glycosylation occurs at Asn103. 5 LRR repeats span residues 126–151 (LPRL…IFSS), 153–175 (TNFI…AFQG), 176–200 (MNNE…AFNG), 201–224 (TTVI…AFRG), and 225–248 (ATGP…GLES). N-linked (GlcNAc...) asparagine glycosylation is found at Asn178 and Asn199. A Sulfotyrosine modification is found at Tyr308. Residues 341–362 (VLIWLINILAIMGNMTVLFVLL) traverse the membrane as a helical segment. Residues 363–372 (TSRYKLTVPR) are Cytoplasmic-facing. Residues 373–393 (FLMCNLSFADFCMGLYLLLIA) form a helical membrane-spanning segment. The Extracellular portion of the chain corresponds to 394–416 (SVDSQTKGQYYNHAIDWQTGSGC). Cys416 and Cys491 are oxidised to a cystine. The helical transmembrane segment at 417–439 (NTAGFFTVFASELSVYTLTVITL) threads the bilayer. At 440–459 (ERWHTITYAIHLDQKLRLRH) the chain is on the cytoplasmic side. A helical transmembrane segment spans residues 460 to 482 (AILIMLGGWLFSSLIAMLPLVGV). At 483–502 (SNYMKVSICFPMDVETTLSQ) the chain is on the extracellular side. Residues 503 to 526 (IYILTILILNVVAFIIICACYIKI) form a helical membrane-spanning segment. The Cytoplasmic portion of the chain corresponds to 527 to 547 (YFAVRNPELMATNKDTKIAKK). Residues 548–571 (MAILIFTDFTCMAPISFFAISAAF) traverse the membrane as a helical segment. The Extracellular portion of the chain corresponds to 572–582 (KMPLITVTNSK). Residues 583 to 604 (VLLVLFYPINSCANPFLYAIFT) form a helical membrane-spanning segment. The Cytoplasmic portion of the chain corresponds to 605–676 (KTFRRDFFLL…LLDKTCYKEY (72 aa)). 2 S-palmitoyl cysteine lipidation sites follow: Cys620 and Cys621.

This sequence belongs to the G-protein coupled receptor 1 family. FSH/LSH/TSH subfamily. In terms of processing, sulfated.

Its subcellular location is the cell membrane. In terms of biological role, receptor for lutropin-choriogonadotropic hormone. The activity of this receptor is mediated by G proteins which activate adenylate cyclase. This Callithrix jacchus (White-tufted-ear marmoset) protein is Lutropin-choriogonadotropic hormone receptor (LHCGR).